Consider the following 341-residue polypeptide: Malate dehydrogenase, mitochondrial (341 aa).

Residues 35–41 and D61 contribute to the NAD(+) site; that span reads GAGGGIG. R109 and R115 together coordinate substrate. Position 122 (N122) interacts with NAD(+). Residues N147 and R181 each coordinate substrate. The active-site Proton acceptor is H205. Position 254 (M254) interacts with NAD(+).

Belongs to the LDH/MDH superfamily. MDH type 1 family. In terms of assembly, homodimer.

It is found in the mitochondrion matrix. The catalysed reaction is (S)-malate + NAD(+) = oxaloacetate + NADH + H(+). This is Malate dehydrogenase, mitochondrial (MDH1) from Schizosaccharomyces pombe (strain 972 / ATCC 24843) (Fission yeast).